The sequence spans 3093 residues: Genome polyprotein (3093 aa).

One can recognise a Peptidase S30 domain in the interval 255-403 (KRLLRHVHQA…TTTGERIEYY (149 aa)). Catalysis depends on for P1 proteinase activity residues histidine 311, aspartate 323, and serine 355. The 120-residue stretch at 690–809 (HYVPKVGYCY…ASELKEYEIG (120 aa)) folds into the Peptidase C6 domain. Active-site for helper component proteinase activity residues include cysteine 698 and histidine 769. The Helicase ATP-binding domain maps to 1215–1366 (RVLADKDNEF…AQKSLDIMTL (152 aa)). 1228–1235 (GHVGCGKS) contacts ATP. Residues 1316 to 1319 (DEVH) carry the DEVH box motif. Residues 1367–1546 (PTMTPLDFVK…QVPPVLRNVN (180 aa)) enclose the Helicase C-terminal domain. The Nuclear localization signal motif lies at 1883 to 1895 (DKVRKKANVHAMQ). An O-(5'-phospho-RNA)-tyrosine modification is found at tyrosine 1915. The 217-residue stretch at 2041–2257 (SKALYGGPRC…VDVGGLYIHN (217 aa)) folds into the Peptidase C4 domain. Residues histidine 2082, aspartate 2121, and cysteine 2193 each act as for nuclear inclusion protein A activity in the active site. Positions 2516 to 2639 (EWFIDADGSQ…NANEEAKDVV (124 aa)) constitute a RdRp catalytic domain. Residues 2800 to 2826 (NAAATSGATTPAQNVGAGTTTPAKATP) show a composition bias toward low complexity. The interval 2800–2842 (NAAATSGATTPAQNVGAGTTTPAKATPQSGRRPSFGSLIDNPI) is disordered.

Belongs to the potyviridae genome polyprotein family. In terms of processing, VPg is uridylylated by the polymerase and is covalently attached to the 5'-end of the genomic RNA. This uridylylated form acts as a nucleotide-peptide primer for the polymerase. Genome polyprotein of potyviruses undergoes post-translational proteolytic processing by the main proteinase NIa-pro resulting in the production of at least ten individual proteins. The P1 proteinase and the HC-pro cleave only their respective C-termini autocatalytically. 6K1 is essential for proper proteolytic separation of P3 from CI.

It localises to the host cytoplasmic vesicle. Its subcellular location is the virion. It carries out the reaction RNA(n) + a ribonucleoside 5'-triphosphate = RNA(n+1) + diphosphate. The catalysed reaction is Hydrolyzes glutaminyl bonds, and activity is further restricted by preferences for the amino acids in P6 - P1' that vary with the species of potyvirus, e.g. Glu-Xaa-Xaa-Tyr-Xaa-Gln-|-(Ser or Gly) for the enzyme from tobacco etch virus. The natural substrate is the viral polyprotein, but other proteins and oligopeptides containing the appropriate consensus sequence are also cleaved.. It catalyses the reaction Hydrolyzes a Gly-|-Gly bond at its own C-terminus, commonly in the sequence -Tyr-Xaa-Val-Gly-|-Gly, in the processing of the potyviral polyprotein.. Its function is as follows. Required for aphid transmission and also has proteolytic activity. Only cleaves a Gly-Gly dipeptide at its own C-terminus. Interacts with virions and aphid stylets. Acts as a suppressor of RNA-mediated gene silencing, also known as post-transcriptional gene silencing (PTGS), a mechanism of plant viral defense that limits the accumulation of viral RNAs. May have RNA-binding activity. Has helicase activity. It may be involved in replication. Functionally, indispensable for virus replication. Reduces the abundance of host transcripts related to jasmonic acid biosynthesis therefore altering the host defenses. In order to increase its own stability, decreases host protein degradation pathways. In terms of biological role, indispensable for virus replication. Its function is as follows. Mediates the cap-independent, EIF4E-dependent translation of viral genomic RNAs. Binds to the cap-binding site of host EIF4E and thus interferes with the host EIF4E-dependent mRNA export and translation. VPg-RNA directly binds EIF4E and is a template for transcription. Also forms trimeric complexes with EIF4E-EIF4G, which are templates for translation. Has RNA-binding and proteolytic activities. Functionally, an RNA-dependent RNA polymerase that plays an essential role in the virus replication. In terms of biological role, involved in aphid transmission, cell-to-cell and systemis movement, encapsidation of the viral RNA and in the regulation of viral RNA amplification. The chain is Genome polyprotein from Brome streak virus (strain 11-Cal) (BStV).